We begin with the raw amino-acid sequence, 48 residues long: MTNKNDSKDMRKNVSKGDNPGQPEPLDGSKKVKNRNHTRQKHNTSHDM.

Basic and acidic residues predominate over residues 1 to 12; that stretch reads MTNKNDSKDMRK. Residues 1-48 form a disordered region; sequence MTNKNDSKDMRKNVSKGDNPGQPEPLDGSKKVKNRNHTRQKHNTSHDM. A compositionally biased stretch (basic residues) spans 31–48; it reads KVKNRNHTRQKHNTSHDM.

This sequence belongs to the SspP family.

Its subcellular location is the spore core. This chain is Small, acid-soluble spore protein P, found in Geobacillus thermodenitrificans (strain NG80-2).